Consider the following 309-residue polypeptide: Homoserine kinase (309 aa).

ATP is bound at residue 91–101; sequence PIGSGLGSSAC.

It belongs to the GHMP kinase family. Homoserine kinase subfamily.

It is found in the cytoplasm. It carries out the reaction L-homoserine + ATP = O-phospho-L-homoserine + ADP + H(+). It functions in the pathway amino-acid biosynthesis; L-threonine biosynthesis; L-threonine from L-aspartate: step 4/5. Catalyzes the ATP-dependent phosphorylation of L-homoserine to L-homoserine phosphate. In Salmonella dublin (strain CT_02021853), this protein is Homoserine kinase.